The chain runs to 475 residues: Glucose-6-phosphate 1-dehydrogenase gcd1 (475 aa).

NADP(+)-binding residues include R42 and K146. 3 residues coordinate D-glucose 6-phosphate: K146, E214, and D233. H238 functions as the Proton acceptor in the catalytic mechanism. K332 contacts D-glucose 6-phosphate. NADP(+)-binding residues include R342 and R365.

This sequence belongs to the glucose-6-phosphate dehydrogenase family.

It localises to the cytoplasm. The enzyme catalyses D-glucose 6-phosphate + NADP(+) = 6-phospho-D-glucono-1,5-lactone + NADPH + H(+). The protein operates within carbohydrate degradation; pentose phosphate pathway; D-ribulose 5-phosphate from D-glucose 6-phosphate (oxidative stage): step 1/3. Catalyzes the rate-limiting step of the oxidative pentose-phosphate pathway, which represents a route for the dissimilation of carbohydrates besides glycolysis. The main function of this enzyme is to provide reducing power (NADPH) and pentose phosphates for fatty acid and nucleic acid synthesis. The polypeptide is Glucose-6-phosphate 1-dehydrogenase gcd1 (Schizosaccharomyces pombe (strain 972 / ATCC 24843) (Fission yeast)).